The primary structure comprises 507 residues: Maturase K (507 aa).

The protein belongs to the intron maturase 2 family. MatK subfamily.

The protein resides in the plastid. It is found in the chloroplast. Functionally, usually encoded in the trnK tRNA gene intron. Probably assists in splicing its own and other chloroplast group II introns. In Lyonia lucida (Fetterbush), this protein is Maturase K.